Consider the following 185-residue polypeptide: NOP protein chaperone 1 (185 aa).

The interval 1–40 (MEVHGKPKASPSCSSPTRDSSGVPVSKELLTAGSDGRGGI) is disordered. Low complexity predominate over residues 10-21 (SPSCSSPTRDSS). Phosphoserine is present on residues serine 34 and serine 66. Positions 118-185 (FEMNQSDSKE…LDSPASKKKK (68 aa)) are disordered. Over residues 143–152 (SESEDEDDSI) the composition is skewed to acidic residues. Serine 178 bears the Phosphoserine mark.

As to quaternary structure, interacts with NOP58, RUVBL1 and RUVBL2; the interactions are direct and NOPCHAP1 bridges the association of NOP58 with RUVBL1:RUVBL2 even in absence of snoRNAs. The interactions with RUVBL1 and RUVBL2 are disrupted upon ATP binding.

Its subcellular location is the nucleus. Its function is as follows. Client-loading PAQosome/R2TP complex cofactor that selects NOP58 to promote box C/D small nucleolar ribonucleoprotein (snoRNP) assembly. Acts as a bridge between NOP58 and the R2TP complex via RUVBL1:RUVBL2. This is NOP protein chaperone 1 from Homo sapiens (Human).